Consider the following 184-residue polypeptide: ATP synthase subunit b, chloroplastic (184 aa).

The helical transmembrane segment at 27 to 49 (LATNPINLSIVIGVLIFFGKGVL) threads the bilayer.

The protein belongs to the ATPase B chain family. As to quaternary structure, F-type ATPases have 2 components, F(1) - the catalytic core - and F(0) - the membrane proton channel. F(1) has five subunits: alpha(3), beta(3), gamma(1), delta(1), epsilon(1). F(0) has four main subunits: a(1), b(1), b'(1) and c(10-14). The alpha and beta chains form an alternating ring which encloses part of the gamma chain. F(1) is attached to F(0) by a central stalk formed by the gamma and epsilon chains, while a peripheral stalk is formed by the delta, b and b' chains.

The protein localises to the plastid. The protein resides in the chloroplast thylakoid membrane. Its function is as follows. F(1)F(0) ATP synthase produces ATP from ADP in the presence of a proton or sodium gradient. F-type ATPases consist of two structural domains, F(1) containing the extramembraneous catalytic core and F(0) containing the membrane proton channel, linked together by a central stalk and a peripheral stalk. During catalysis, ATP synthesis in the catalytic domain of F(1) is coupled via a rotary mechanism of the central stalk subunits to proton translocation. Component of the F(0) channel, it forms part of the peripheral stalk, linking F(1) to F(0). The sequence is that of ATP synthase subunit b, chloroplastic from Lotus japonicus (Lotus corniculatus var. japonicus).